A 211-amino-acid chain; its full sequence is Uracil phosphoribosyltransferase (211 aa).

5-phospho-alpha-D-ribose 1-diphosphate is bound by residues Arg-77, Arg-102, and 129-137 (DPMLATGGS). Residues Ile-192 and 197–199 (GDA) contribute to the uracil site. Residue Asp-198 coordinates 5-phospho-alpha-D-ribose 1-diphosphate.

Belongs to the UPRTase family. Requires Mg(2+) as cofactor.

It carries out the reaction UMP + diphosphate = 5-phospho-alpha-D-ribose 1-diphosphate + uracil. It functions in the pathway pyrimidine metabolism; UMP biosynthesis via salvage pathway; UMP from uracil: step 1/1. Its activity is regulated as follows. Allosterically activated by GTP. Its function is as follows. Catalyzes the conversion of uracil and 5-phospho-alpha-D-ribose 1-diphosphate (PRPP) to UMP and diphosphate. This is Uracil phosphoribosyltransferase from Corynebacterium glutamicum (strain R).